We begin with the raw amino-acid sequence, 2014 residues long: AP-1 accessory protein LAA1 (2014 aa).

In terms of assembly, interacts with the clathrin-associated adapter complex AP-1. Interacts directly with LAA2.

It localises to the golgi apparatus. The protein localises to the cytoplasmic vesicle. The protein resides in the clathrin-coated vesicle. Involved in localization of clathrin adapter protein complex-1 (AP-1) and subsequent AP-1-mediated clathrin-coated vesicle cargo loading. In complex with LAA2, cooperates with the small GTPase ARF1 and the phosphatidyl-inositol-4-phosphate (PI4P) synthesis to confer temporal specificity to AP-1 recruitment. This chain is AP-1 accessory protein LAA1, found in Saccharomyces cerevisiae (strain ATCC 204508 / S288c) (Baker's yeast).